A 296-amino-acid chain; its full sequence is 5'-3' exonuclease (296 aa).

In terms of domain architecture, 5'-3' exonuclease spans 175–262; the sequence is VMPKALIDIK…VPLACTLKDA (88 aa).

Its function is as follows. 5'-3' exonuclease acting preferentially on double-stranded DNA. This chain is 5'-3' exonuclease (ypcP), found in Bacillus subtilis (strain 168).